Consider the following 156-residue polypeptide: Cyanate hydratase (156 aa).

Residues Arg-96, Glu-99, and Ser-122 contribute to the active site.

This sequence belongs to the cyanase family. In terms of assembly, homodecamer composed of five homodimers.

The catalysed reaction is cyanate + hydrogencarbonate + 3 H(+) = NH4(+) + 2 CO2. Catalyzes the reaction of cyanate with bicarbonate to produce ammonia and carbon dioxide. The polypeptide is Cyanate hydratase (cynS) (Escherichia coli O157:H7).